Reading from the N-terminus, the 207-residue chain is Thiamine-phosphate synthase (207 aa).

Residues 36 to 40 and N68 contribute to the 4-amino-2-methyl-5-(diphosphooxymethyl)pyrimidine site; that span reads QLRLK. 2 residues coordinate Mg(2+): D69 and D88. Position 107 (T107) interacts with 4-amino-2-methyl-5-(diphosphooxymethyl)pyrimidine. Position 134–136 (134–136) interacts with 2-[(2R,5Z)-2-carboxy-4-methylthiazol-5(2H)-ylidene]ethyl phosphate; sequence TGT. K137 is a 4-amino-2-methyl-5-(diphosphooxymethyl)pyrimidine binding site. G164 serves as a coordination point for 2-[(2R,5Z)-2-carboxy-4-methylthiazol-5(2H)-ylidene]ethyl phosphate.

Belongs to the thiamine-phosphate synthase family. Mg(2+) is required as a cofactor.

It catalyses the reaction 2-[(2R,5Z)-2-carboxy-4-methylthiazol-5(2H)-ylidene]ethyl phosphate + 4-amino-2-methyl-5-(diphosphooxymethyl)pyrimidine + 2 H(+) = thiamine phosphate + CO2 + diphosphate. It carries out the reaction 2-(2-carboxy-4-methylthiazol-5-yl)ethyl phosphate + 4-amino-2-methyl-5-(diphosphooxymethyl)pyrimidine + 2 H(+) = thiamine phosphate + CO2 + diphosphate. The catalysed reaction is 4-methyl-5-(2-phosphooxyethyl)-thiazole + 4-amino-2-methyl-5-(diphosphooxymethyl)pyrimidine + H(+) = thiamine phosphate + diphosphate. It participates in cofactor biosynthesis; thiamine diphosphate biosynthesis; thiamine phosphate from 4-amino-2-methyl-5-diphosphomethylpyrimidine and 4-methyl-5-(2-phosphoethyl)-thiazole: step 1/1. Condenses 4-methyl-5-(beta-hydroxyethyl)thiazole monophosphate (THZ-P) and 2-methyl-4-amino-5-hydroxymethyl pyrimidine pyrophosphate (HMP-PP) to form thiamine monophosphate (TMP). This chain is Thiamine-phosphate synthase, found in Rhodospirillum centenum (strain ATCC 51521 / SW).